The sequence spans 474 residues: Bifunctional protein HldE (474 aa).

The segment at 1–318 (MKLSMPRFDQ…RAIQREEGSE (318 aa)) is ribokinase. 194 to 197 (NLSE) contacts ATP. The active site involves Asp263. A cytidylyltransferase region spans residues 343–474 (FTNGCFDILH…AIVEKIRKSE (132 aa)).

In the N-terminal section; belongs to the carbohydrate kinase PfkB family. This sequence in the C-terminal section; belongs to the cytidylyltransferase family. Homodimer.

The catalysed reaction is D-glycero-beta-D-manno-heptose 7-phosphate + ATP = D-glycero-beta-D-manno-heptose 1,7-bisphosphate + ADP + H(+). The enzyme catalyses D-glycero-beta-D-manno-heptose 1-phosphate + ATP + H(+) = ADP-D-glycero-beta-D-manno-heptose + diphosphate. It participates in nucleotide-sugar biosynthesis; ADP-L-glycero-beta-D-manno-heptose biosynthesis; ADP-L-glycero-beta-D-manno-heptose from D-glycero-beta-D-manno-heptose 7-phosphate: step 1/4. Its pathway is nucleotide-sugar biosynthesis; ADP-L-glycero-beta-D-manno-heptose biosynthesis; ADP-L-glycero-beta-D-manno-heptose from D-glycero-beta-D-manno-heptose 7-phosphate: step 3/4. Functionally, catalyzes the phosphorylation of D-glycero-D-manno-heptose 7-phosphate at the C-1 position to selectively form D-glycero-beta-D-manno-heptose-1,7-bisphosphate. Its function is as follows. Catalyzes the ADP transfer from ATP to D-glycero-beta-D-manno-heptose 1-phosphate, yielding ADP-D-glycero-beta-D-manno-heptose. This chain is Bifunctional protein HldE, found in Pseudomonas fluorescens (strain Pf0-1).